A 61-amino-acid polypeptide reads, in one-letter code: MALDGSSGGGSNVETLLIVAIIVVIMAIMLYYFWWMPRQQKKCSKAEECTCNNGSCSLKTS.

Residues 16 to 36 (LLIVAIIVVIMAIMLYYFWWM) traverse the membrane as a helical segment.

This sequence belongs to the asfivirus inner membrane protein p12 family. In terms of assembly, homomultimer; disulfide-linked. In terms of processing, not glycosylated.

It localises to the virion membrane. The sequence is that of Inner membrane protein p12 from Ornithodoros (relapsing fever ticks).